Consider the following 427-residue polypeptide: Serine hydroxymethyltransferase (427 aa).

120–122 contacts (6S)-5,6,7,8-tetrahydrofolate; it reads GHI. An N6-(pyridoxal phosphate)lysine modification is found at lysine 226.

Belongs to the SHMT family. Homodimer. The cofactor is pyridoxal 5'-phosphate.

It is found in the cytoplasm. The protein operates within amino-acid biosynthesis; glycine biosynthesis; glycine from L-serine: step 1/1. Catalyzes the reversible interconversion of serine and glycine with a modified folate serving as the one-carbon carrier. Also exhibits a pteridine-independent aldolase activity toward beta-hydroxyamino acids, producing glycine and aldehydes, via a retro-aldol mechanism. In Pyrococcus furiosus (strain ATCC 43587 / DSM 3638 / JCM 8422 / Vc1), this protein is Serine hydroxymethyltransferase.